Consider the following 310-residue polypeptide: Ribose-phosphate pyrophosphokinase (310 aa).

ATP-binding positions include 34–36 and 93–94; these read DQE and RQ. Mg(2+) contacts are provided by His-127 and Asp-167. Residue Lys-190 is part of the active site. D-ribose 5-phosphate is bound by residues Arg-192, Asp-216, and 220 to 224; that span reads DSGGT.

The protein belongs to the ribose-phosphate pyrophosphokinase family. Class I subfamily. Homohexamer. It depends on Mg(2+) as a cofactor.

It is found in the cytoplasm. It carries out the reaction D-ribose 5-phosphate + ATP = 5-phospho-alpha-D-ribose 1-diphosphate + AMP + H(+). It functions in the pathway metabolic intermediate biosynthesis; 5-phospho-alpha-D-ribose 1-diphosphate biosynthesis; 5-phospho-alpha-D-ribose 1-diphosphate from D-ribose 5-phosphate (route I): step 1/1. Functionally, involved in the biosynthesis of the central metabolite phospho-alpha-D-ribosyl-1-pyrophosphate (PRPP) via the transfer of pyrophosphoryl group from ATP to 1-hydroxyl of ribose-5-phosphate (Rib-5-P). This is Ribose-phosphate pyrophosphokinase from Brucella melitensis biotype 1 (strain ATCC 23456 / CCUG 17765 / NCTC 10094 / 16M).